A 589-amino-acid chain; its full sequence is Netrin-G2 (589 aa).

The signal sequence occupies residues 1 to 17; it reads MLRLLALFLHCLPLVSG. 3 disulfide bridges follow: Cys-22/Cys-39, Cys-61/Cys-81, and Cys-69/Cys-77. Residues 35 to 286 form the Laminin N-terminal domain; that stretch reads EFYACQPKVM…AISNIEVIGR (252 aa). Residues 69–88 form an NGL discriminant loop I region; the sequence is CSHENPYLCSNECDASNPDL. Asn-122 and Asn-128 each carry an N-linked (GlcNAc...) asparagine glycan. Cys-171 and Cys-195 are joined by a disulfide. Residues 201–203 are NGL discriminant loop II; it reads RWA. The NGL discriminant loop III stretch occupies residues 264-267; the sequence is TYVQ. Disulfide bonds link Cys-287–Cys-296, Cys-289–Cys-305, Cys-307–Cys-316, Cys-319–Cys-344, Cys-413–Cys-422, Cys-415–Cys-433, Cys-436–Cys-445, Cys-448–Cys-466, Cys-469–Cys-481, Cys-471–Cys-487, Cys-489–Cys-498, Cys-501–Cys-511, Cys-516–Cys-529, Cys-523–Cys-535, and Cys-537–Cys-546. 3 Laminin EGF-like domains span residues 287 to 346, 413 to 468, and 469 to 513; these read CKCN…ACAA, CECY…VCIE, and CNCN…GCYP. A glycan (N-linked (GlcNAc...) asparagine) is linked at Asn-310. A glycan (N-linked (GlcNAc...) asparagine) is linked at Asn-455. The N-linked (GlcNAc...) asparagine glycan is linked to Asn-482. Gly-566 is lipidated: GPI-anchor amidated glycine. Positions 567 to 589 are cleaved as a propeptide — removed in mature form; it reads IVPRPDTLLGCLLLLGLAARLAC.

In terms of assembly, interacts with LRRC4. Post-translationally, N-glycosylated. Expression is restricted primarily to neurons of the CNS, particularly in the cerebral cortex, habenular nucleus and superior colliculus. Low levels in lung, kidney, heart and spleen.

It is found in the cell membrane. In terms of biological role, involved in controlling patterning and neuronal circuit formation at the laminar, cellular, subcellular and synaptic levels. Promotes neurite outgrowth of both axons and dendrites. The protein is Netrin-G2 (Ntng2) of Mus musculus (Mouse).